The primary structure comprises 101 residues: Protein Tat (101 aa).

The segment at 1-24 is interaction with human CREBBP; it reads MEPVDPNLEPWKHPGSQPRTACNN. Positions 1–48 are transactivation; that stretch reads MEPVDPNLEPWKHPGSQPRTACNNCYCKKCCFHCQVCFTKKGLGISYG. Cys22, Cys25, and Cys27 together coordinate Zn(2+). Positions 22–37 are cysteine-rich; it reads CNNCYCKKCCFHCQVC. Lys28 is modified (N6-acetyllysine; by host PCAF). Zn(2+) is bound by residues Cys30, His33, Cys34, and Cys37. A core region spans residues 38 to 48; it reads FTKKGLGISYG. The segment at 47-101 is disordered; that stretch reads YGRKKRRQRRRPPQDSQTHQSSLSKQPTSQLRGDPTGPTESKKKVERETETDPVH. Positions 48–57 are enriched in basic residues; that stretch reads GRKKRRQRRR. Residues 49–57 carry the Nuclear localization signal, RNA-binding (TAR), and protein transduction motif; the sequence is RKKRRQRRR. The segment at 49–86 is interaction with the host capping enzyme RNGTT; the sequence is RKKRRQRRRPPQDSQTHQSSLSKQPTSQLRGDPTGPTE. Residues Lys50 and Lys51 each carry the N6-acetyllysine; by host EP300 and GCN5L2 modification. An asymmetric dimethylarginine; by host PRMT6 mark is found at Arg52 and Arg53. The segment covering 61-77 has biased composition (polar residues); that stretch reads DSQTHQSSLSKQPTSQL. A Glycyl lysine isopeptide (Lys-Gly) (interchain with G-Cter in ubiquitin) cross-link involves residue Lys71. The short motif at 78–80 is the Cell attachment site element; that stretch reads RGD. Over residues 86-101 the composition is skewed to basic and acidic residues; that stretch reads ESKKKVERETETDPVH.

Belongs to the lentiviruses Tat family. Interacts with host CCNT1. Associates with the P-TEFb complex composed at least of Tat, P-TEFb (CDK9 and CCNT1), TAR RNA, RNA Pol II. Recruits the HATs CREBBP, TAF1/TFIID, EP300, PCAF and GCN5L2. Interacts with host KAT5/Tip60; this interaction targets the latter to degradation. Interacts with the host deacetylase SIRT1. Interacts with host capping enzyme RNGTT; this interaction stimulates RNGTT. Binds to host KDR, and to the host integrins ITGAV/ITGB3 and ITGA5/ITGB1. Interacts with host KPNB1/importin beta-1 without previous binding to KPNA1/importin alpha-1. Interacts with EIF2AK2. Interacts with host nucleosome assembly protein NAP1L1; this interaction may be required for the transport of Tat within the nucleus, since the two proteins interact at the nuclear rim. Interacts with host C1QBP/SF2P32; this interaction involves lysine-acetylated Tat. Interacts with the host chemokine receptors CCR2, CCR3 and CXCR4. Interacts with host DPP4/CD26; this interaction may trigger an anti-proliferative effect. Interacts with host LDLR. Interacts with the host extracellular matrix metalloproteinase MMP1. Interacts with host PRMT6; this interaction mediates Tat's methylation. Interacts with, and is ubiquitinated by MDM2/Hdm2. Interacts with host PSMC3 and HTATIP2. Interacts with STAB1; this interaction may overcome SATB1-mediated repression of IL2 and IL2RA (interleukin) in T cells by binding to the same domain than HDAC1. Interacts (when acetylated) with human CDK13, thereby increasing HIV-1 mRNA splicing and promoting the production of the doubly spliced HIV-1 protein Nef. Interacts with host TBP; this interaction modulates the activity of transcriptional pre-initiation complex. Interacts with host RELA. Interacts with host PLSCR1; this interaction negatively regulates Tat transactivation activity by altering its subcellular distribution. In terms of processing, asymmetrical arginine methylation by host PRMT6 seems to diminish the transactivation capacity of Tat and affects the interaction with host CCNT1. Post-translationally, acetylation by EP300, CREBBP, GCN5L2/GCN5 and PCAF regulates the transactivation activity of Tat. EP300-mediated acetylation of Lys-50 promotes dissociation of Tat from the TAR RNA through the competitive binding to PCAF's bromodomain. In addition, the non-acetylated Tat's N-terminus can also interact with PCAF. PCAF-mediated acetylation of Lys-28 enhances Tat's binding to CCNT1. Lys-50 is deacetylated by SIRT1. Polyubiquitination by host MDM2 does not target Tat to degradation, but activates its transactivation function and fosters interaction with CCNT1 and TAR RNA. In terms of processing, phosphorylated by EIF2AK2 on serine and threonine residues adjacent to the basic region important for TAR RNA binding and function. Phosphorylation of Tat by EIF2AK2 is dependent on the prior activation of EIF2AK2 by dsRNA.

Its subcellular location is the host nucleus. It is found in the host nucleolus. The protein localises to the host cytoplasm. It localises to the secreted. In terms of biological role, transcriptional activator that increases RNA Pol II processivity, thereby increasing the level of full-length viral transcripts. Recognizes a hairpin structure at the 5'-LTR of the nascent viral mRNAs referred to as the transactivation responsive RNA element (TAR) and recruits the cyclin T1-CDK9 complex (P-TEFb complex) that will in turn hyperphosphorylate the RNA polymerase II to allow efficient elongation. The CDK9 component of P-TEFb and other Tat-activated kinases hyperphosphorylate the C-terminus of RNA Pol II that becomes stabilized and much more processive. Other factors such as HTATSF1/Tat-SF1, SUPT5H/SPT5, and HTATIP2 are also important for Tat's function. Besides its effect on RNA Pol II processivity, Tat induces chromatin remodeling of proviral genes by recruiting the histone acetyltransferases (HATs) CREBBP, EP300 and PCAF to the chromatin. This also contributes to the increase in proviral transcription rate, especially when the provirus integrates in transcriptionally silent region of the host genome. To ensure maximal activation of the LTR, Tat mediates nuclear translocation of NF-kappa-B by interacting with host RELA. Through its interaction with host TBP, Tat may also modulate transcription initiation. Tat can reactivate a latently infected cell by penetrating in it and transactivating its LTR promoter. In the cytoplasm, Tat is thought to act as a translational activator of HIV-1 mRNAs. Extracellular circulating Tat can be endocytosed by surrounding uninfected cells via the binding to several surface receptors such as CD26, CXCR4, heparan sulfate proteoglycans (HSPG) or LDLR. Neurons are rarely infected, but they internalize Tat via their LDLR. Through its interaction with nuclear HATs, Tat is potentially able to control the acetylation-dependent cellular gene expression. Modulates the expression of many cellular genes involved in cell survival, proliferation or in coding for cytokines or cytokine receptors. Tat plays a role in T-cell and neurons apoptosis. Tat induced neurotoxicity and apoptosis probably contribute to neuroAIDS. Circulating Tat also acts as a chemokine-like and/or growth factor-like molecule that binds to specific receptors on the surface of the cells, affecting many cellular pathways. In the vascular system, Tat binds to ITGAV/ITGB3 and ITGA5/ITGB1 integrins dimers at the surface of endothelial cells and competes with bFGF for heparin-binding sites, leading to an excess of soluble bFGF. The sequence is that of Protein Tat from Human immunodeficiency virus type 1 group M subtype B (isolate YU-2) (HIV-1).